A 287-amino-acid polypeptide reads, in one-letter code: Ribosomal RNA small subunit methyltransferase I (287 aa).

It belongs to the methyltransferase superfamily. RsmI family.

It localises to the cytoplasm. The catalysed reaction is cytidine(1402) in 16S rRNA + S-adenosyl-L-methionine = 2'-O-methylcytidine(1402) in 16S rRNA + S-adenosyl-L-homocysteine + H(+). Functionally, catalyzes the 2'-O-methylation of the ribose of cytidine 1402 (C1402) in 16S rRNA. The protein is Ribosomal RNA small subunit methyltransferase I of Helicobacter pylori (strain ATCC 700392 / 26695) (Campylobacter pylori).